We begin with the raw amino-acid sequence, 190 residues long: Potassium-transporting ATPase KdpC subunit (190 aa).

The helical transmembrane segment at 10–30 threads the bilayer; it reads TFIFLLLITGGVYPLLTTVLG.

This sequence belongs to the KdpC family. As to quaternary structure, the system is composed of three essential subunits: KdpA, KdpB and KdpC.

It is found in the cell inner membrane. Functionally, part of the high-affinity ATP-driven potassium transport (or Kdp) system, which catalyzes the hydrolysis of ATP coupled with the electrogenic transport of potassium into the cytoplasm. This subunit acts as a catalytic chaperone that increases the ATP-binding affinity of the ATP-hydrolyzing subunit KdpB by the formation of a transient KdpB/KdpC/ATP ternary complex. In Escherichia coli (strain SE11), this protein is Potassium-transporting ATPase KdpC subunit.